A 2216-amino-acid polypeptide reads, in one-letter code: Protein Ycf2 (2216 aa).

ATP is bound at residue Gly1567–Ser1574.

It belongs to the Ycf2 family.

The protein localises to the plastid stroma. Functionally, probable ATPase of unknown function. Its presence in a non-photosynthetic plant (Epifagus virginiana) and experiments in tobacco indicate that it has an essential function which is probably not related to photosynthesis. The chain is Protein Ycf2 from Epifagus virginiana (Beechdrops).